A 387-amino-acid chain; its full sequence is Guanylate kinase 1 (387 aa).

In terms of domain architecture, Guanylate kinase-like spans 137–319 (EKPIVISGPS…CYKKLKNLLG (183 aa)). An ATP-binding site is contributed by 144–151 (GPSGVGKG). Catalysis depends on residues Arg177, Arg270, and Arg281. 2 residues coordinate ATP: Asn304 and Asp305.

Belongs to the guanylate kinase family. In terms of assembly, monomer.

The enzyme catalyses GMP + ATP = GDP + ADP. Its function is as follows. Essential for recycling GMP and indirectly, cGMP. Required for normal development of the gametophyte and embryo, in association with GK2. This chain is Guanylate kinase 1 (GK-1), found in Arabidopsis thaliana (Mouse-ear cress).